An 873-amino-acid chain; its full sequence is Zinc fingers and homeoboxes protein 1 (873 aa).

Residues L24–N63 form a disordered region. Position 36 is a phosphothreonine (T36). A phosphoserine mark is found at S45, S47, and S48. 2 consecutive C2H2-type zinc fingers follow at residues Y70–H93 and Y102–H125. K159 participates in a covalent cross-link: Glycyl lysine isopeptide (Lys-Gly) (interchain with G-Cter in SUMO2). The disordered stretch occupies residues V198–T236. S202 is subject to Phosphoserine. Residues N212–T221 show a composition bias toward basic and acidic residues. Over residues E223–T236 the composition is skewed to low complexity. The segment at N272 to P432 is required for dimerization. The interval N272–F564 is required for interaction with NFYA. A DNA-binding region (homeobox 1) is located at residues N284–E346. The tract at residues V431–K454 is disordered. Residues K441, K454, and K485 each participate in a glycyl lysine isopeptide (Lys-Gly) (interchain with G-Cter in SUMO2) cross-link. The segment at residues S464–Q526 is a DNA-binding region (homeobox 2). 3 disordered regions span residues D544–P563, K626–T668, and S732–W769. Residues P550–N562 show a composition bias toward polar residues. Residues P569–M630 constitute a DNA-binding region (homeobox 3). A Glycyl lysine isopeptide (Lys-Gly) (interchain with G-Cter in SUMO2) cross-link involves residue K629. Residue S648 is modified to Phosphoserine. The homeobox 4 DNA-binding region spans S660 to W722. The segment at M734–N768 is required for nuclear localization. Residues L740–K764 are compositionally biased toward basic residues. S774 carries the phosphoserine modification. A DNA-binding region (homeobox 5) is located at residues K777–F832. A disordered region spans residues I829–D873. Over residues L831–T857 the composition is skewed to acidic residues. The tract at residues L831 to D873 is required for repressor activity. Positions H863–D873 are enriched in basic residues.

The protein belongs to the ZHX family. Forms homodimers. Heterodimer (via HD1 domain) with ZHX2 (via HD1 domain). Also forms a heterodimer with ZHX3 which is a prerequisite for repressor activity. Interacts with ATF7IP and NFYA. Interacts (via homeobox domains) with DNMT3B (via PWWP domain).

It is found in the nucleus. Acts as a transcriptional repressor. Increases DNMT3B-mediated repressive transcriptional activity when DNMT3B is tethered to DNA. May link molecule between DNMT3B and other co-repressor proteins. The polypeptide is Zinc fingers and homeoboxes protein 1 (ZHX1) (Pongo pygmaeus (Bornean orangutan)).